Consider the following 402-residue polypeptide: 1-deoxy-D-xylulose 5-phosphate reductoisomerase (402 aa).

NADPH is bound by residues threonine 10, glycine 11, serine 12, isoleucine 13, asparagine 38, and asparagine 124. Position 125 (lysine 125) interacts with 1-deoxy-D-xylulose 5-phosphate. Residue glutamate 126 coordinates NADPH. Mn(2+) is bound at residue aspartate 150. 1-deoxy-D-xylulose 5-phosphate is bound by residues serine 151, glutamate 152, serine 186, and histidine 209. Position 152 (glutamate 152) interacts with Mn(2+). Glycine 215 is an NADPH binding site. The 1-deoxy-D-xylulose 5-phosphate site is built by serine 222, asparagine 227, lysine 228, and glutamate 231. Glutamate 231 is a binding site for Mn(2+).

This sequence belongs to the DXR family. The cofactor is Mg(2+). Mn(2+) is required as a cofactor.

It carries out the reaction 2-C-methyl-D-erythritol 4-phosphate + NADP(+) = 1-deoxy-D-xylulose 5-phosphate + NADPH + H(+). It functions in the pathway isoprenoid biosynthesis; isopentenyl diphosphate biosynthesis via DXP pathway; isopentenyl diphosphate from 1-deoxy-D-xylulose 5-phosphate: step 1/6. Functionally, catalyzes the NADPH-dependent rearrangement and reduction of 1-deoxy-D-xylulose-5-phosphate (DXP) to 2-C-methyl-D-erythritol 4-phosphate (MEP). In Vibrio vulnificus (strain CMCP6), this protein is 1-deoxy-D-xylulose 5-phosphate reductoisomerase.